The following is a 415-amino-acid chain: Serine hydroxymethyltransferase (415 aa).

(6S)-5,6,7,8-tetrahydrofolate contacts are provided by residues L117 and 121 to 123; that span reads GHL. K226 is subject to N6-(pyridoxal phosphate)lysine.

The protein belongs to the SHMT family. As to quaternary structure, homodimer. Requires pyridoxal 5'-phosphate as cofactor.

It localises to the cytoplasm. The catalysed reaction is (6R)-5,10-methylene-5,6,7,8-tetrahydrofolate + glycine + H2O = (6S)-5,6,7,8-tetrahydrofolate + L-serine. It participates in one-carbon metabolism; tetrahydrofolate interconversion. It functions in the pathway amino-acid biosynthesis; glycine biosynthesis; glycine from L-serine: step 1/1. In terms of biological role, catalyzes the reversible interconversion of serine and glycine with tetrahydrofolate (THF) serving as the one-carbon carrier. This reaction serves as the major source of one-carbon groups required for the biosynthesis of purines, thymidylate, methionine, and other important biomolecules. Also exhibits THF-independent aldolase activity toward beta-hydroxyamino acids, producing glycine and aldehydes, via a retro-aldol mechanism. This Leptospira borgpetersenii serovar Hardjo-bovis (strain JB197) protein is Serine hydroxymethyltransferase.